The sequence spans 1325 residues: Bile salt export pump (1325 aa).

The Cytoplasmic portion of the chain corresponds to 1 to 62 (MSDAVILRSV…FSSTTDIWLM (62 aa)). The 324-residue stretch at 62-385 (MFVGSLCAFL…ASSCLEAFAT (324 aa)) folds into the ABC transmembrane type-1 1 domain. Residues 63–83 (FVGSLCAFLHGLSHPGVLLIF) form a helical membrane-spanning segment. Residues 84–147 (GTMTDVFIAY…MIKFASYYAG (64 aa)) are Extracellular-facing. N-linked (GlcNAc...) asparagine glycosylation is found at Asn109, Asn116, Asn122, and Asn125. The chain crosses the membrane as a helical span at residues 148–168 (IALLVLITGYIQICFWVIAAA). The Cytoplasmic portion of the chain corresponds to 169-240 (RQIQKMRKIS…FLLGFYQGWK (72 aa)). A helical transmembrane segment spans residues 241 to 261 (LTLVIISVSPLIGIGAAIIGL). The Extracellular portion of the chain corresponds to 262–319 (SVSKFTDYELKAYAKAGSVADEVISSMRTVAAFGGEKKEVERYEKNLVFAQRWGIRKG). Residues 320 to 340 (IVMGFFTGFMWCLIFLCYALA) form a helical membrane-spanning segment. The Cytoplasmic segment spans residues 341–353 (FWYGSKLVLEDGE). A helical transmembrane segment spans residues 354–374 (YTAGTLVQIFLSILLGALNLG). N-linked (GlcNAc...) asparagine glycans are attached at residues Asn375, Asn424, and Asn440. Residues 375 to 759 (NASSCLEAFA…KFNAPEWPYM (385 aa)) lie on the Extracellular side of the membrane. One can recognise an ABC transporter 1 domain in the interval 420–656 (IEFHNVTFHY…KGVYFTLVTL (237 aa)). An ATP-binding site is contributed by 455–462 (GSSGSGKS). Asn591 carries N-linked (GlcNAc...) asparagine glycosylation. One can recognise an ABC transmembrane type-1 2 domain in the interval 759-1047 (MLFGAVGAAV…ASSYTPSYAK (289 aa)). A helical membrane pass occupies residues 760-780 (LFGAVGAAVNGSVTPLYAFLF). Over 781–798 (SQILGTFSLPDKEEQRSQ) the chain is Cytoplasmic. Residues 799 to 819 (INGVCLLFVAVGCVSLCTQFL) form a helical membrane-spanning segment. Over 820–894 (QGYAFAKSGE…NSFTNVTVAM (75 aa)) the chain is Extracellular. N-linked (GlcNAc...) asparagine glycosylation is present at Asn889. Residues 895–915 (IIAFFFSWKLSLVIMCFFPFL) form a helical membrane-spanning segment. Over 916–983 (ALSGALQTRM…PFKTAFRKAN (68 aa)) the chain is Cytoplasmic. Residues 984-1004 (VYGFCFGFSQCIVFVANSASY) traverse the membrane as a helical segment. Over 1005 to 1014 (RYGGYLIPNE) the chain is Extracellular. A helical membrane pass occupies residues 1015–1035 (GLHFSYVFRVISSVVLSATAL). Topologically, residues 1036 to 1325 (GRASSYTPSY…KLVTTGAPIS (290 aa)) are cytoplasmic. Residues 1082–1320 (VDFVDCKFTY…KGAYYKLVTT (239 aa)) enclose the ABC transporter 2 domain. 1117–1124 (GSSGCGKS) is an ATP binding site.

Belongs to the ABC transporter superfamily. ABCB family. Multidrug resistance exporter (TC 3.A.1.201) subfamily. In terms of assembly, interacts with HAX1. Interacts with the adapter protein complex 2 (AP-2) throught AP2A2 or AP2A1; this interaction regulates cell membrane expression of ABCB11 through its internalization in a clathrin-dependent manner and its subsequent degradation. In terms of processing, N-glycosylated. Ubiquitinated; short-chain ubiquitination regulates cell-Surface expression of ABCB11. In terms of tissue distribution, liver.

The protein resides in the apical cell membrane. The protein localises to the recycling endosome membrane. Its subcellular location is the endosome. It localises to the cell membrane. It catalyses the reaction cholate(in) + ATP + H2O = cholate(out) + ADP + phosphate + H(+). The enzyme catalyses taurocholate(in) + ATP + H2O = taurocholate(out) + ADP + phosphate + H(+). It carries out the reaction glycocholate(in) + ATP + H2O = glycocholate(out) + ADP + phosphate + H(+). The catalysed reaction is glycochenodeoxycholate(in) + ATP + H2O = glycochenodeoxycholate(out) + ADP + phosphate + H(+). It catalyses the reaction taurochenodeoxycholate(in) + ATP + H2O = taurochenodeoxycholate(out) + ADP + phosphate + H(+). The enzyme catalyses glycoursodeoxycholate(in) + ATP + H2O = glycoursodeoxycholate(out) + ADP + phosphate + H(+). It carries out the reaction tauroursodeoxycholate(in) + ATP + H2O = tauroursodeoxycholate(out) + ADP + phosphate + H(+). The catalysed reaction is taurodeoxycholate(in) + ATP + H2O = taurodeoxycholate(out) + ADP + phosphate + H(+). It catalyses the reaction taurolithocholate 3-sulfate(in) + ATP + H2O = taurolithocholate 3-sulfate(out) + ADP + phosphate + H(+). The enzyme catalyses pravastatin(in) + ATP + H2O = pravastatin(out) + ADP + phosphate + H(+). Its activity is regulated as follows. The uptake of taurocholate is inhibited by taurolithocholate sulfate with an IC(50) of 9 uM. Pravastatin competitively inhibits the transport of taurocholic acid. Cyclosporin A, glibenclamide, rifampicin and troglitazonestrongly competitively inhibit the transport activity of taurocholate. The canalicular transport activity of taurocholate is strongly dependent on canalicular membrane cholesterol content. The uptake of taurocholate is increased by short- and medium-chain fatty acids. Cholesterol increases transport capacity of taurocholate without affecting the affinity for the substrate. In terms of biological role, catalyzes the transport of the major hydrophobic bile salts, such as taurine and glycine-conjugated cholic acid across the canalicular membrane of hepatocytes in an ATP-dependent manner, therefore participates in hepatic bile acid homeostasis and consequently to lipid homeostasis through regulation of biliary lipid secretion in a bile salts dependent manner. Transports taurine-conjugated bile salts more rapidly than glycine-conjugated bile salts. Also transports non-bile acid compounds, such as pravastatin and fexofenadine in an ATP-dependent manner and may be involved in their biliary excretion. This chain is Bile salt export pump, found in Canis lupus familiaris (Dog).